The following is a 72-amino-acid chain: Translation initiation factor IF-1 (72 aa).

The S1-like domain occupies 1–72 (MAKEDSIRMQ…NKGRIVYRER (72 aa)).

It belongs to the IF-1 family. In terms of assembly, component of the 30S ribosomal translation pre-initiation complex which assembles on the 30S ribosome in the order IF-2 and IF-3, IF-1 and N-formylmethionyl-tRNA(fMet); mRNA recruitment can occur at any time during PIC assembly.

It localises to the cytoplasm. Its function is as follows. One of the essential components for the initiation of protein synthesis. Stabilizes the binding of IF-2 and IF-3 on the 30S subunit to which N-formylmethionyl-tRNA(fMet) subsequently binds. Helps modulate mRNA selection, yielding the 30S pre-initiation complex (PIC). Upon addition of the 50S ribosomal subunit IF-1, IF-2 and IF-3 are released leaving the mature 70S translation initiation complex. The polypeptide is Translation initiation factor IF-1 (Halorhodospira halophila (strain DSM 244 / SL1) (Ectothiorhodospira halophila (strain DSM 244 / SL1))).